Here is a 306-residue protein sequence, read N- to C-terminus: Peroxisome biogenesis factor 2 (306 aa).

Topologically, residues 1 to 15 are peroxisomal matrix; it reads MAASENNMEEINPVL. A helical transmembrane segment spans residues 16–42; sequence RISQLDAIELNKALEQLIWSQFSSCFQ. Residues 43–48 lie on the Cytoplasmic side of the membrane; that stretch reads GFKPGL. The helical transmembrane segment at 49 to 74 threads the bilayer; it reads LTRFEPEIKASLCLFLWRYTIYTKNA. The Peroxisomal matrix segment spans residues 75–98; it reads TVGQTILNMQYKNDLAVTKKYRPL. The helical transmembrane segment at 99 to 125 threads the bilayer; the sequence is NKQQKVWFALFLVGGKWLEERSFDLFS. Residues 126–134 lie on the Cytoplasmic side of the membrane; that stretch reads NHPFGASFQ. A helical transmembrane segment spans residues 135–161; it reads RTKYFLNAISGLLKFGALLNFLIFLQQ. Over 162–188 the chain is Peroxisomal matrix; sequence GKFATLTERLLGIRSVFSRPQDVRQVG. The chain crosses the membrane as a helical span at residues 189–212; it reads FEYMNREILWHGFAEFLIFLLPLI. At 213–306 the chain is on the cytoplasmic side; that stretch reads NTQKLKSKLF…KIEISEVHTL (94 aa). Residues cysteine 245, cysteine 248, cysteine 260, histidine 262, cysteine 265, cysteine 268, cysteine 281, and cysteine 284 each coordinate Zn(2+). The RING-type zinc-finger motif lies at 245–285; the sequence is CCLCGEWPAMPHTIGCSHVFCYYCIKSNYMSDMYFTCPKCS.

The protein belongs to the pex2/pex10/pex12 family. In terms of assembly, component of the PEX2-PEX10-PEX12 retrotranslocation channel.

The protein resides in the peroxisome membrane. It catalyses the reaction [E2 ubiquitin-conjugating enzyme]-S-ubiquitinyl-L-cysteine + [acceptor protein]-L-cysteine = [E2 ubiquitin-conjugating enzyme]-L-cysteine + [acceptor protein]-S-ubiquitinyl-L-cysteine.. The catalysed reaction is S-ubiquitinyl-[E2 ubiquitin-conjugating enzyme]-L-cysteine + [acceptor protein]-L-lysine = [E2 ubiquitin-conjugating enzyme]-L-cysteine + N(6)-ubiquitinyl-[acceptor protein]-L-lysine.. It participates in protein modification; protein ubiquitination. In terms of biological role, E3 ubiquitin-protein ligase component of a retrotranslocation channel required for peroxisome organization by mediating export of the PEX5 receptor from peroxisomes to the cytosol, thereby promoting PEX5 recycling. The retrotranslocation channel is composed of PEX2, PEX10 and PEX12; each subunit contributing transmembrane segments that coassemble into an open channel that specifically allows the passage of PEX5 through the peroxisomal membrane. PEX2 also regulates peroxisome organization by acting as a E3 ubiquitin-protein ligase. This chain is Peroxisome biogenesis factor 2, found in Xenopus laevis (African clawed frog).